Reading from the N-terminus, the 177-residue chain is NAD(P)H-quinone oxidoreductase subunit 6, chloroplastic (177 aa).

5 helical membrane-spanning segments follow: residues Ile10–Thr30, Pro32–Pro52, Ala61–Met81, Phe92–Ile112, and Phe152–Ala172.

Belongs to the complex I subunit 6 family. NDH is composed of at least 16 different subunits, 5 of which are encoded in the nucleus.

The protein localises to the plastid. It is found in the chloroplast thylakoid membrane. It carries out the reaction a plastoquinone + NADH + (n+1) H(+)(in) = a plastoquinol + NAD(+) + n H(+)(out). The catalysed reaction is a plastoquinone + NADPH + (n+1) H(+)(in) = a plastoquinol + NADP(+) + n H(+)(out). NDH shuttles electrons from NAD(P)H:plastoquinone, via FMN and iron-sulfur (Fe-S) centers, to quinones in the photosynthetic chain and possibly in a chloroplast respiratory chain. The immediate electron acceptor for the enzyme in this species is believed to be plastoquinone. Couples the redox reaction to proton translocation, and thus conserves the redox energy in a proton gradient. This chain is NAD(P)H-quinone oxidoreductase subunit 6, chloroplastic (ndhG), found in Nymphaea alba (White water-lily).